Consider the following 341-residue polypeptide: UDP-3-O-acylglucosamine N-acyltransferase (341 aa).

Catalysis depends on histidine 239, which acts as the Proton acceptor.

Belongs to the transferase hexapeptide repeat family. LpxD subfamily. In terms of assembly, homotrimer.

It catalyses the reaction a UDP-3-O-[(3R)-3-hydroxyacyl]-alpha-D-glucosamine + a (3R)-hydroxyacyl-[ACP] = a UDP-2-N,3-O-bis[(3R)-3-hydroxyacyl]-alpha-D-glucosamine + holo-[ACP] + H(+). Its pathway is bacterial outer membrane biogenesis; LPS lipid A biosynthesis. Its function is as follows. Catalyzes the N-acylation of UDP-3-O-acylglucosamine using 3-hydroxyacyl-ACP as the acyl donor. Is involved in the biosynthesis of lipid A, a phosphorylated glycolipid that anchors the lipopolysaccharide to the outer membrane of the cell. In Idiomarina loihiensis (strain ATCC BAA-735 / DSM 15497 / L2-TR), this protein is UDP-3-O-acylglucosamine N-acyltransferase.